A 304-amino-acid chain; its full sequence is Probable 5-dehydro-4-deoxyglucarate dehydratase (304 aa).

It belongs to the DapA family.

It carries out the reaction 5-dehydro-4-deoxy-D-glucarate + H(+) = 2,5-dioxopentanoate + CO2 + H2O. The protein operates within carbohydrate acid metabolism; D-glucarate degradation; 2,5-dioxopentanoate from D-glucarate: step 2/2. The chain is Probable 5-dehydro-4-deoxyglucarate dehydratase from Methylobacterium radiotolerans (strain ATCC 27329 / DSM 1819 / JCM 2831 / NBRC 15690 / NCIMB 10815 / 0-1).